The chain runs to 457 residues: ATP synthase subunit beta (457 aa).

An ATP-binding site is contributed by 147-154; sequence GGAGVGKT.

Belongs to the ATPase alpha/beta chains family. In terms of assembly, F-type ATPases have 2 components, CF(1) - the catalytic core - and CF(0) - the membrane proton channel. CF(1) has five subunits: alpha(3), beta(3), gamma(1), delta(1), epsilon(1). CF(0) has three main subunits: a(1), b(2) and c(9-12). The alpha and beta chains form an alternating ring which encloses part of the gamma chain. CF(1) is attached to CF(0) by a central stalk formed by the gamma and epsilon chains, while a peripheral stalk is formed by the delta and b chains.

It localises to the cell inner membrane. The catalysed reaction is ATP + H2O + 4 H(+)(in) = ADP + phosphate + 5 H(+)(out). Its function is as follows. Produces ATP from ADP in the presence of a proton gradient across the membrane. The catalytic sites are hosted primarily by the beta subunits. In Haemophilus influenzae (strain PittEE), this protein is ATP synthase subunit beta.